We begin with the raw amino-acid sequence, 160 residues long: Major strawberry allergen Fra a 1.05 (160 aa).

It belongs to the BetVI family. Post-translationally, phosphorylated in vivo. Phosphorylation prevents its activity as ribonuclease.

Its function is as follows. Possesses ribonuclease activity in vitro. This chain is Major strawberry allergen Fra a 1.05, found in Fragaria ananassa (Strawberry).